Reading from the N-terminus, the 131-residue chain is MIVRNVKDVMGTEDEVRTDTWVSRRVLLKKDGMGFSFHETTIFPGTRTHIHYKNHLEAVWCIEGDGSIETIADGKTYELGPGVVYALNENDEHWLCGGKQPLRVICVFNPPLTGQEVHDAEGVYALVEEAA.

It belongs to the ectoine synthase family.

The enzyme catalyses (2S)-4-acetamido-2-aminobutanoate = L-ectoine + H2O. The protein operates within amine and polyamine biosynthesis; ectoine biosynthesis; L-ectoine from L-aspartate 4-semialdehyde: step 3/3. Catalyzes the circularization of gamma-N-acetyl-alpha,gamma-diaminobutyric acid (ADABA) to ectoine (1,4,5,6-tetrahydro-2-methyl-4-pyrimidine carboxylic acid), which is an excellent osmoprotectant. This Bordetella bronchiseptica (strain ATCC BAA-588 / NCTC 13252 / RB50) (Alcaligenes bronchisepticus) protein is L-ectoine synthase.